A 620-amino-acid polypeptide reads, in one-letter code: Probable indole-3-acetic acid-amido synthetase GH3.7 (620 aa).

Belongs to the IAA-amido conjugating enzyme family. As to expression, ubiquitous.

In terms of biological role, may catalyze the synthesis of indole-3-acetic acid (IAA)-amino acid conjugates, providing a mechanism for the plant to cope with the presence of excess auxin. This chain is Probable indole-3-acetic acid-amido synthetase GH3.7 (GH3.7), found in Oryza sativa subsp. japonica (Rice).